Reading from the N-terminus, the 500-residue chain is Glycerol kinase (500 aa).

Thr13 is an ADP binding site. Thr13, Thr14, and Ser15 together coordinate ATP. Thr13 is a binding site for sn-glycerol 3-phosphate. Arg17 serves as a coordination point for ADP. Residues Arg83, Glu84, Tyr135, and Asp244 each contribute to the sn-glycerol 3-phosphate site. 5 residues coordinate glycerol: Arg83, Glu84, Tyr135, Asp244, and Gln245. Positions 266 and 309 each coordinate ADP. Positions 266, 309, 313, and 410 each coordinate ATP. Residues Gly410 and Asn414 each coordinate ADP.

The protein belongs to the FGGY kinase family.

It carries out the reaction glycerol + ATP = sn-glycerol 3-phosphate + ADP + H(+). It functions in the pathway polyol metabolism; glycerol degradation via glycerol kinase pathway; sn-glycerol 3-phosphate from glycerol: step 1/1. Inhibited by fructose 1,6-bisphosphate (FBP). Key enzyme in the regulation of glycerol uptake and metabolism. Catalyzes the phosphorylation of glycerol to yield sn-glycerol 3-phosphate. The polypeptide is Glycerol kinase (Burkholderia pseudomallei (strain K96243)).